We begin with the raw amino-acid sequence, 246 residues long: tRNA (guanine-N(1)-)-methyltransferase (246 aa).

S-adenosyl-L-methionine contacts are provided by residues G117 and 137-142 (IGDYVL).

It belongs to the RNA methyltransferase TrmD family. As to quaternary structure, homodimer.

Its subcellular location is the cytoplasm. The catalysed reaction is guanosine(37) in tRNA + S-adenosyl-L-methionine = N(1)-methylguanosine(37) in tRNA + S-adenosyl-L-homocysteine + H(+). In terms of biological role, specifically methylates guanosine-37 in various tRNAs. The protein is tRNA (guanine-N(1)-)-methyltransferase of Acinetobacter baumannii (strain ACICU).